The primary structure comprises 570 residues: La-related protein 7 (570 aa).

Met-1 bears the N-acetylmethionine mark. Residues 1-16 (METENQKTMEESTKRK) show a composition bias toward basic and acidic residues. Disordered regions lie at residues 1 to 24 (METE…KRSR) and 180 to 364 (LNNP…ERHK). An HTH La-type RNA-binding domain is found at 22–116 (RSRVKQVLAD…KPLGERPKDE (95 aa)). The region spanning 119 to 197 (RTVYVELLPK…PRKPGIFPKT (79 aa)) is the RRM domain. Basic residues predominate over residues 213 to 222 (KKKKKKKGRI). A Glycyl lysine isopeptide (Lys-Gly) (interchain with G-Cter in SUMO2) cross-link involves residue Lys-231. Thr-251 carries the phosphothreonine modification. Ser-253 and Ser-256 each carry phosphoserine. The residue at position 260 (Thr-260) is a Phosphothreonine. Basic and acidic residues predominate over residues 286–295 (RAGKRERCSA). Phosphoserine is present on residues Ser-294 and Ser-334. At Thr-335 the chain carries Phosphothreonine. Residues 340–349 (ETDRKGDSLS) show a composition bias toward basic and acidic residues. Ser-347 is subject to Phosphoserine. Residues 350-363 (KVKRKHKKKHKERH) are compositionally biased toward basic residues. A Glycyl lysine isopeptide (Lys-Gly) (interchain with G-Cter in SUMO2) cross-link involves residue Lys-406. Residues 438–551 (QFVTGVIVKI…TEKLITKAEK (114 aa)) form the xRRM domain.

This sequence belongs to the LARP7 family. As to quaternary structure, core component of the 7SK RNP complex, at least composed of 7SK RNA, LARP7, MEPCE, HEXIM1 (or HEXIM2) and P-TEFb (composed of CDK9 and CCNT1/cyclin-T1). Interacts with METTL16. Interacts with RBM7; upon genotoxic stress this interaction is enhanced, triggering the release of inactive P-TEFb complex from the core, yielding to P-TEFb complex activation. Associates with box C/D small nucleolar ribonucleoprotein (snoRNP) complexes.

It localises to the nucleus. The protein localises to the nucleoplasm. In terms of biological role, RNA-binding protein that specifically binds distinct small nuclear RNA (snRNAs) and regulates their processing and function. Specifically binds the 7SK snRNA (7SK RNA) and acts as a core component of the 7SK ribonucleoprotein (RNP) complex, thereby acting as a negative regulator of transcription elongation by RNA polymerase II. The 7SK RNP complex sequesters the positive transcription elongation factor b (P-TEFb) in a large inactive 7SK RNP complex preventing RNA polymerase II phosphorylation and subsequent transcriptional elongation. The 7SK RNP complex also promotes snRNA gene transcription by RNA polymerase II via interaction with the little elongation complex (LEC). LARP7 specifically binds to the highly conserved 3'-terminal U-rich stretch of 7SK RNA; on stimulation, remains associated with 7SK RNA, whereas P-TEFb is released from the complex. LARP7 also acts as a regulator of mRNA splicing fidelity by promoting U6 snRNA processing. Specifically binds U6 snRNAs and associates with a subset of box C/D RNP complexes: promotes U6 snRNA 2'-O-methylation by facilitating U6 snRNA loading into box C/D RNP complexes. U6 snRNA 2'-O-methylation is required for mRNA splicing fidelity. Binds U6 snRNAs with a 5'-CAGGG-3' sequence motif. U6 snRNA processing is required for spermatogenesis. The chain is La-related protein 7 from Mus musculus (Mouse).